The chain runs to 106 residues: Ferredoxin-2 (106 aa).

4Fe-4S ferredoxin-type domains lie at 2-29 (YVVTENCIKCKYQDCVEVCPVDCFYEGE) and 30-59 (NFLVINPDECIDCGVCNPECPAEAIAGKWL). Cys-8 and Cys-16 together coordinate [3Fe-4S] cluster. The [4Fe-4S] cluster site is built by Cys-20, Cys-39, Cys-42, and Cys-45. Cys-49 provides a ligand contact to [3Fe-4S] cluster. A disordered region spans residues 80–106 (ADADDWKDKPDKTGLLSENPGKGTVCH).

It depends on [4Fe-4S] cluster as a cofactor. Requires [3Fe-4S] cluster as cofactor.

Ferredoxins are iron-sulfur proteins that transfer electrons in a wide variety of metabolic reactions. This Rhodospirillum rubrum protein is Ferredoxin-2.